A 433-amino-acid polypeptide reads, in one-letter code: Enolase (433 aa).

Position 1 is an N-acetylserine (Ser1). Residues Ser36 and His157 each coordinate (2R)-2-phosphoglycerate. Glu209 (proton donor) is an active-site residue. The Mn(2+) site is built by Asp244, Glu294, and Asp319. 3 residues coordinate (2R)-2-phosphoglycerate: Lys344, Arg373, and Ser374. The active-site Proton acceptor is Lys344.

The protein belongs to the enolase family. In terms of assembly, homodimer. Mg(2+) is required as a cofactor.

It localises to the cytoplasm. It catalyses the reaction (2R)-2-phosphoglycerate = phosphoenolpyruvate + H2O. The protein operates within carbohydrate degradation; glycolysis; pyruvate from D-glyceraldehyde 3-phosphate: step 4/5. With respect to regulation, inhibited by 2-phosphoglycolic acid. This Homarus gammarus (European lobster) protein is Enolase.